Here is a 242-residue protein sequence, read N- to C-terminus: tRNA pseudouridine synthase A (242 aa).

Aspartate 51 serves as the catalytic Nucleophile. Position 107 (tyrosine 107) interacts with substrate.

This sequence belongs to the tRNA pseudouridine synthase TruA family. In terms of assembly, homodimer.

It catalyses the reaction uridine(38/39/40) in tRNA = pseudouridine(38/39/40) in tRNA. Functionally, formation of pseudouridine at positions 38, 39 and 40 in the anticodon stem and loop of transfer RNAs. The chain is tRNA pseudouridine synthase A from Helicobacter pylori (strain G27).